Consider the following 270-residue polypeptide: Putative phosphatase YxeH (270 aa).

The active-site Nucleophile is Asp-8. Asp-8 serves as a coordination point for Mg(2+). Met-9 serves as a coordination point for phosphate. Asp-10 provides a ligand contact to Mg(2+). Residues 42 to 43 and Lys-196 each bind phosphate; that span reads TG. A Mg(2+)-binding site is contributed by Asp-219. Asn-222 serves as a coordination point for phosphate.

It belongs to the HAD-like hydrolase superfamily. Cof family. Mg(2+) is required as a cofactor.

This chain is Putative phosphatase YxeH (yxeH), found in Bacillus subtilis (strain 168).